The following is an 89-amino-acid chain: Small ribosomal subunit protein uS15 (89 aa).

This sequence belongs to the universal ribosomal protein uS15 family. As to quaternary structure, part of the 30S ribosomal subunit. Forms a bridge to the 50S subunit in the 70S ribosome, contacting the 23S rRNA.

Its function is as follows. One of the primary rRNA binding proteins, it binds directly to 16S rRNA where it helps nucleate assembly of the platform of the 30S subunit by binding and bridging several RNA helices of the 16S rRNA. Functionally, forms an intersubunit bridge (bridge B4) with the 23S rRNA of the 50S subunit in the ribosome. The sequence is that of Small ribosomal subunit protein uS15 from Leuconostoc mesenteroides subsp. mesenteroides (strain ATCC 8293 / DSM 20343 / BCRC 11652 / CCM 1803 / JCM 6124 / NCDO 523 / NBRC 100496 / NCIMB 8023 / NCTC 12954 / NRRL B-1118 / 37Y).